A 93-amino-acid polypeptide reads, in one-letter code: Small ribosomal subunit protein uS19 (93 aa).

It belongs to the universal ribosomal protein uS19 family.

Its function is as follows. Protein S19 forms a complex with S13 that binds strongly to the 16S ribosomal RNA. In Rubrobacter xylanophilus (strain DSM 9941 / JCM 11954 / NBRC 16129 / PRD-1), this protein is Small ribosomal subunit protein uS19.